A 181-amino-acid polypeptide reads, in one-letter code: MIELEKHYYEKVFGQLKAHFNFKSPSQVPKITKVVVNMTAGNQSSNAKAIEAVLEDLAKITGQKAYKTVAKKSLATWKLRQGMPMGGKVTLRRQQMWNFLAKVLHIAIPRVRDFRGLSPKSFDGNGNFALGFKESIVFPEITFDKISKIRGLDVIIVTSARNDQEGFKLLELLGFPFAKKV.

It belongs to the universal ribosomal protein uL5 family. As to quaternary structure, part of the 50S ribosomal subunit; part of the 5S rRNA/L5/L18/L25 subcomplex. Contacts the 5S rRNA and the P site tRNA. Forms a bridge to the 30S subunit in the 70S ribosome.

In terms of biological role, this is one of the proteins that bind and probably mediate the attachment of the 5S RNA into the large ribosomal subunit, where it forms part of the central protuberance. In the 70S ribosome it contacts protein S13 of the 30S subunit (bridge B1b), connecting the 2 subunits; this bridge is implicated in subunit movement. Contacts the P site tRNA; the 5S rRNA and some of its associated proteins might help stabilize positioning of ribosome-bound tRNAs. The sequence is that of Large ribosomal subunit protein uL5 from Mesomycoplasma hyopneumoniae (strain 7448) (Mycoplasma hyopneumoniae).